Reading from the N-terminus, the 463-residue chain is Mitochondrial dynamics protein MID51 (463 aa).

Residues 1-23 (MAGAGERKGKKDDNGIGTAIDFV) are Mitochondrial intermembrane-facing. A helical transmembrane segment spans residues 24-46 (LSNARLVLGVGGAAMLGIATLAV). The Cytoplasmic portion of the chain corresponds to 47–463 (KRMYDRAISA…LSEPEVLLQT (417 aa)). Residues 49 to 195 (MYDRAISAPT…LSGSLYDDLQ (147 aa)) are dimerization. 4 positions are modified to phosphoserine: Ser-55, Ser-59, Ser-79, and Ser-94. A disordered region spans residues 57-77 (PTSPTRLSHSGKRSWEEPNWM). Residues 160–169 (AAVDICAELR) are important for interaction with DNM1L. Positions 187, 189, and 201 each coordinate ADP. Residues 234–243 (RRENPEYFPR) are important for interaction with DNM1L. Positions 340, 342, and 368 each coordinate ADP.

Belongs to the MID49/MID51 family. In terms of assembly, homodimer. Interacts with DNM1L.

The protein resides in the mitochondrion outer membrane. Its function is as follows. Mitochondrial outer membrane protein which regulates mitochondrial fission/fusion dynamics. Promotes the recruitment and association of the fission mediator dynamin-related protein 1 (DNM1L) to the mitochondrial surface independently of the mitochondrial fission FIS1 and MFF proteins. Regulates DNM1L GTPase activity and DNM1L oligomerization. Binds ADP and can also bind GDP, although with lower affinity. Does not bind CDP, UDP, ATP, AMP or GTP. Inhibits DNM1L GTPase activity in the absence of bound ADP. Requires ADP to stimulate DNM1L GTPase activity and the assembly of DNM1L into long, oligomeric tubules with a spiral pattern, as opposed to the ring-like DNM1L oligomers observed in the absence of bound ADP. Does not require ADP for its function in recruiting DNM1L. This is Mitochondrial dynamics protein MID51 (Mief1) from Mus musculus (Mouse).